A 352-amino-acid polypeptide reads, in one-letter code: Small ribosomal subunit biogenesis GTPase RsgA (352 aa).

Residues 109-277 enclose the CP-type G domain; that stretch reads DTVLKRPDMY…LIDSPGIREF (169 aa). Residues 165–168 and 219–227 contribute to the GTP site; these read NKAD and GQSGVGKSS. The Zn(2+) site is built by Cys301, Cys306, His308, and Cys314.

Belongs to the TRAFAC class YlqF/YawG GTPase family. RsgA subfamily. In terms of assembly, monomer. Associates with 30S ribosomal subunit, binds 16S rRNA. It depends on Zn(2+) as a cofactor.

The protein resides in the cytoplasm. In terms of biological role, one of several proteins that assist in the late maturation steps of the functional core of the 30S ribosomal subunit. Helps release RbfA from mature subunits. May play a role in the assembly of ribosomal proteins into the subunit. Circularly permuted GTPase that catalyzes slow GTP hydrolysis, GTPase activity is stimulated by the 30S ribosomal subunit. The chain is Small ribosomal subunit biogenesis GTPase RsgA from Alcanivorax borkumensis (strain ATCC 700651 / DSM 11573 / NCIMB 13689 / SK2).